The primary structure comprises 402 residues: Protein arginine methyltransferase NDUFAF7 homolog, mitochondrial (402 aa).

It belongs to the NDUFAF7 family.

Its subcellular location is the mitochondrion. The enzyme catalyses L-arginyl-[protein] + 2 S-adenosyl-L-methionine = N(omega),N(omega)'-dimethyl-L-arginyl-[protein] + 2 S-adenosyl-L-homocysteine + 2 H(+). In terms of biological role, arginine methyltransferase involved in the assembly or stability of mitochondrial NADH:ubiquinone oxidoreductase complex (complex I). This Saccharomyces cerevisiae (strain ATCC 204508 / S288c) (Baker's yeast) protein is Protein arginine methyltransferase NDUFAF7 homolog, mitochondrial.